Consider the following 227-residue polypeptide: AN1-type zinc finger protein 3 (227 aa).

Residues 12-44 form an A20-type zinc finger; it reads PSLPPRCPCGFWGSSKTMNLCSKCFADFQKKQP. Residues cysteine 18, cysteine 20, cysteine 32, and cysteine 35 each contribute to the Zn(2+) site. Disordered regions lie at residues 41 to 100 and 113 to 148; these read KKQP…EECG and PTKRSCGTDSQSENEASPVKRPRLLENTERSEETSR. Residues 49–59 show a composition bias toward polar residues; it reads APSTSNSQSDL. The span at 66 to 77 shows a compositional bias: low complexity; that stretch reads SDNNNTSITTPT. Polar residues-rich tracts occupy residues 78 to 94 and 113 to 127; these read LSPSQQPLPTELNVTSP and PTKRSCGTDSQSENE. The span at 135–148 shows a compositional bias: basic and acidic residues; that stretch reads RLLENTERSEETSR. The AN1-type zinc-finger motif lies at 151-200; it reads QKSRRRCFQCQTKLELVQQELGSCRCGYVFCMLHRLPEQHDCTFDHMGRG. Zn(2+) is bound by residues cysteine 157, cysteine 160, cysteine 174, cysteine 176, cysteine 181, histidine 184, histidine 190, and cysteine 192.

This is AN1-type zinc finger protein 3 (ZFAND3) from Homo sapiens (Human).